The chain runs to 191 residues: Glycerol-3-phosphate acyltransferase (191 aa).

5 helical membrane passes run 3-23 (YLIV…FILT), 51-71 (TLGY…VLYV), 78-98 (YIFI…WLKF), 108-128 (VGIL…SWAV), and 150-170 (YLIV…VLIF).

The protein belongs to the PlsY family. Probably interacts with PlsX.

The protein resides in the cell inner membrane. The catalysed reaction is an acyl phosphate + sn-glycerol 3-phosphate = a 1-acyl-sn-glycero-3-phosphate + phosphate. It functions in the pathway lipid metabolism; phospholipid metabolism. In terms of biological role, catalyzes the transfer of an acyl group from acyl-phosphate (acyl-PO(4)) to glycerol-3-phosphate (G3P) to form lysophosphatidic acid (LPA). This enzyme utilizes acyl-phosphate as fatty acyl donor, but not acyl-CoA or acyl-ACP. The protein is Glycerol-3-phosphate acyltransferase of Pelagibacter ubique (strain HTCC1062).